The following is a 262-amino-acid chain: MEVREKKDEKMEMTRRKSSALDHHRLPPYTYSQTANKEKPTTKRNGSDPDPDPDLDTNPISISHAPRSYARPQTTSPGKARYRECQKNHAASSGGHVVDGCGEFMSSGEEGTVESLLCAACDCHRSFHRKEIDGLFVVNFNSFGHSQRPLGSRHVSPIMMSFGGGGGCAAESSTEDLNKFHQSFSGYGVDQFHHYQPKKRFRTKFNEEQKEKMMEFAEKIGWRMTKLEDDEVNRFCREIKVKRQVFKVWMHNNKQAAKKKDL.

Composition is skewed to basic and acidic residues over residues 1-25 and 36-47; these read MEVR…DHHR and NKEKPTTKRNGS. The interval 1 to 93 is disordered; that stretch reads MEVREKKDEK…ECQKNHAASS (93 aa). The ZF-HD dimerization-type; degenerate zinc-finger motif lies at 82–131; sequence YRECQKNHAASSGGHVVDGCGEFMSSGEEGTVESLLCAACDCHRSFHRKE. Positions 198–261 form a DNA-binding region, homeobox; the sequence is KKRFRTKFNE…NNKQAAKKKD (64 aa).

In terms of assembly, homo- and heterodimer with other ZFHD proteins. Interacts with MIF1 and MIF3; these interactions prevent nuclear localization and DNA-binding to inhibit transcription regulation activity. Binds to ZHD1, ZHD2, ZHD10 and ZHD11. In terms of tissue distribution, expressed in seedlings, roots, leaves, stems, flowers and inflorescence.

It is found in the nucleus. In terms of biological role, putative transcription factor. The sequence is that of Zinc-finger homeodomain protein 6 (ZHD6) from Arabidopsis thaliana (Mouse-ear cress).